An 891-amino-acid chain; its full sequence is Alanine--tRNA ligase (891 aa).

Zn(2+)-binding residues include His564, His568, Cys678, and His682.

It belongs to the class-II aminoacyl-tRNA synthetase family. Zn(2+) is required as a cofactor.

Its subcellular location is the cytoplasm. The catalysed reaction is tRNA(Ala) + L-alanine + ATP = L-alanyl-tRNA(Ala) + AMP + diphosphate. In terms of biological role, catalyzes the attachment of alanine to tRNA(Ala) in a two-step reaction: alanine is first activated by ATP to form Ala-AMP and then transferred to the acceptor end of tRNA(Ala). Also edits incorrectly charged Ser-tRNA(Ala) and Gly-tRNA(Ala) via its editing domain. In Nitrobacter hamburgensis (strain DSM 10229 / NCIMB 13809 / X14), this protein is Alanine--tRNA ligase.